A 193-amino-acid chain; its full sequence is Ectoine TRAP transporter small permease protein TeaB (193 aa).

4 helical membrane-spanning segments follow: residues 33-55 (ILALGVLLMATNTVANVIGRFAL), 65-82 (VNRILIIMITFAGIGYAA), 103-125 (RALMIVISLFTSLVMFFLMYYSV), and 145-167 (IFIIYVWVPLGFLITGIQYLFTA).

It belongs to the TRAP transporter small permease family. As to quaternary structure, the complex comprises the extracytoplasmic solute receptor protein TeaA, and the two transmembrane proteins TeaB and TeaC.

It localises to the cell inner membrane. Its function is as follows. Part of the tripartite ATP-independent periplasmic (TRAP) transport system TeaABC involved in the uptake of ectoine and hydroxyectoine in response to osmotic upshock. Probably functions as a recovery system for synthesized ectoine that leaks out of the cell. The chain is Ectoine TRAP transporter small permease protein TeaB (teaB) from Halomonas elongata (strain ATCC 33173 / DSM 2581 / NBRC 15536 / NCIMB 2198 / 1H9).